The chain runs to 245 residues: Probable phosphatase ECA2529 (245 aa).

Positions 7, 9, 15, 40, 73, 101, 131, 192, and 194 each coordinate Zn(2+).

The protein belongs to the PHP family. In terms of assembly, homotrimer. Zn(2+) is required as a cofactor.

This chain is Probable phosphatase ECA2529, found in Pectobacterium atrosepticum (strain SCRI 1043 / ATCC BAA-672) (Erwinia carotovora subsp. atroseptica).